The primary structure comprises 497 residues: MSQTVSPPLYAAIDLGSNSFHMLVVRHIDGSVQTMAKIKRKVRLAAGLDENNALSTEAMQRGWDCLSLFAERLRDIPKENIRIVGTATLRTAINVDIFLEKANQILGYDINVISGEEEAATIYKGVAHTSGGSGRRLVVDIGGASTEMIIGEGFSAKALTSLKMGCVTWLERHFKDRQLTATNFNNAIEAAKSTLAPILDSYTDIGWDVCVGASGTVQALQEIMLAQGMDEVITHAKLKRLQKQAMITERLEELEIEGLTLERALVFPSGLSILIAIFELLEIDSMTLAGGALREGLAYEMVDEFRQEDIRARTIKSVQSRYQMDVSYSEQVAVVAQTLLEQAGAETWVSEPQAGVLLQTAAKLHEIGLTIDFKKGGEHSAYLLQNLDLPGFTRAQKHCLGELTRRYREQLTSLPEQHAISGTSSKRILRILRLAILLTHRRNPALEPEFKLTTDDNNLTLTLSKQWLADNPLTAAELEIESNRQTDIGWPLNIECL.

It belongs to the GppA/Ppx family. GppA subfamily.

It catalyses the reaction guanosine 3'-diphosphate 5'-triphosphate + H2O = guanosine 3',5'-bis(diphosphate) + phosphate + H(+). Its pathway is purine metabolism; ppGpp biosynthesis; ppGpp from GTP: step 2/2. Catalyzes the conversion of pppGpp to ppGpp. Guanosine pentaphosphate (pppGpp) is a cytoplasmic signaling molecule which together with ppGpp controls the 'stringent response', an adaptive process that allows bacteria to respond to amino acid starvation, resulting in the coordinated regulation of numerous cellular activities. The polypeptide is Guanosine-5'-triphosphate,3'-diphosphate pyrophosphatase (Vibrio atlanticus (strain LGP32) (Vibrio splendidus (strain Mel32))).